We begin with the raw amino-acid sequence, 172 residues long: Keratin-associated protein 13-3 (172 aa).

Repeat copies occupy residues 46–55, 56–65, 66–75, 76–85, and 92–101. The tract at residues 46-101 is 5 X 10 AA approximate repeats; that stretch reads CQLGSSLYRGCQETCWRPNSCQTLCVESSPCHTSCYYPRTHMLCNSCLTMHVGSRG.

Belongs to the PMG family. Interacts with hair keratins.

Functionally, in the hair cortex, hair keratin intermediate filaments are embedded in an interfilamentous matrix, consisting of hair keratin-associated proteins (KRTAP), which are essential for the formation of a rigid and resistant hair shaft through their extensive disulfide bond cross-linking with abundant cysteine residues of hair keratins. The matrix proteins include the high-sulfur and high-glycine-tyrosine keratins. In Homo sapiens (Human), this protein is Keratin-associated protein 13-3 (KRTAP13-3).